A 449-amino-acid chain; its full sequence is Glucose-6-phosphate isomerase (449 aa).

The active-site Proton donor is the Glu-290. Active-site residues include His-311 and Lys-425.

Belongs to the GPI family.

The protein resides in the cytoplasm. The enzyme catalyses alpha-D-glucose 6-phosphate = beta-D-fructose 6-phosphate. The protein operates within carbohydrate biosynthesis; gluconeogenesis. Its pathway is carbohydrate degradation; glycolysis; D-glyceraldehyde 3-phosphate and glycerone phosphate from D-glucose: step 2/4. Catalyzes the reversible isomerization of glucose-6-phosphate to fructose-6-phosphate. In Clostridioides difficile (strain 630) (Peptoclostridium difficile), this protein is Glucose-6-phosphate isomerase.